A 261-amino-acid chain; its full sequence is NAD(P)H-quinone oxidoreductase subunit K, chloroplastic (261 aa).

Positions 64, 65, 129, and 160 each coordinate [4Fe-4S] cluster.

It belongs to the complex I 20 kDa subunit family. As to quaternary structure, NDH is composed of at least 16 different subunits, 5 of which are encoded in the nucleus. The cofactor is [4Fe-4S] cluster.

The protein resides in the plastid. The protein localises to the chloroplast thylakoid membrane. It catalyses the reaction a plastoquinone + NADH + (n+1) H(+)(in) = a plastoquinol + NAD(+) + n H(+)(out). The enzyme catalyses a plastoquinone + NADPH + (n+1) H(+)(in) = a plastoquinol + NADP(+) + n H(+)(out). Functionally, NDH shuttles electrons from NAD(P)H:plastoquinone, via FMN and iron-sulfur (Fe-S) centers, to quinones in the photosynthetic chain and possibly in a chloroplast respiratory chain. The immediate electron acceptor for the enzyme in this species is believed to be plastoquinone. Couples the redox reaction to proton translocation, and thus conserves the redox energy in a proton gradient. In Physcomitrium patens (Spreading-leaved earth moss), this protein is NAD(P)H-quinone oxidoreductase subunit K, chloroplastic.